Consider the following 530-residue polypeptide: Phosphoenolpyruvate carboxykinase (ATP) (530 aa).

Residues Arg56, Tyr196, and Lys202 each contribute to the substrate site. Residues Lys202, His221, and 237-245 (GLSGTGKTT) each bind ATP. Mn(2+)-binding residues include Lys202 and His221. Asp258 lines the Mn(2+) pocket. Residues Glu286, Arg322, 438-439 (RI), and Thr444 contribute to the ATP site. A substrate-binding site is contributed by Arg322.

Belongs to the phosphoenolpyruvate carboxykinase (ATP) family. Monomer. Mn(2+) serves as cofactor.

The protein localises to the cytoplasm. It catalyses the reaction oxaloacetate + ATP = phosphoenolpyruvate + ADP + CO2. The protein operates within carbohydrate biosynthesis; gluconeogenesis. In terms of biological role, involved in the gluconeogenesis. Catalyzes the conversion of oxaloacetate (OAA) to phosphoenolpyruvate (PEP) through direct phosphoryl transfer between the nucleoside triphosphate and OAA. The sequence is that of Phosphoenolpyruvate carboxykinase (ATP) from Photobacterium profundum (strain SS9).